The chain runs to 322 residues: NADH-cytochrome b5 reductase 2 (322 aa).

Residues 32-48 (LAPIYISVGLAGLGVGL) traverse the membrane as a helical segment. In terms of domain architecture, FAD-binding FR-type spans 72-176 (QGWVDLKLSE…KGPIPKYPWE (105 aa)). 179–214 (KHKHICLIAGGTGITPMYQLARQIFKNPEDQTKVTL) contacts FAD.

This sequence belongs to the flavoprotein pyridine nucleotide cytochrome reductase family. The cofactor is FAD.

Its subcellular location is the mitochondrion outer membrane. It catalyses the reaction 2 Fe(III)-[cytochrome b5] + NADH = 2 Fe(II)-[cytochrome b5] + NAD(+) + H(+). Its function is as follows. May mediate the reduction of outer membrane cytochrome b5. This is NADH-cytochrome b5 reductase 2 (mcr1) from Aspergillus clavatus (strain ATCC 1007 / CBS 513.65 / DSM 816 / NCTC 3887 / NRRL 1 / QM 1276 / 107).